The chain runs to 502 residues: Cytochrome P450 monooxygenase AacuE (502 aa).

The chain crosses the membrane as a helical span at residues Ala-4–Pro-26. Asn-393 carries an N-linked (GlcNAc...) asparagine glycan. Heme is bound at residue Cys-439.

Belongs to the cytochrome P450 family. The cofactor is heme.

It localises to the membrane. It participates in secondary metabolite biosynthesis. Its function is as follows. Cytochrome P450 monooxygenase; part of the gene cluster that mediates the biosynthesis of the tetrahydroxanthone dimer secalonic acid D. The pathway begins with the synthesis of atrochrysone thioester by the polyketide synthase AacuL. The atrochrysone carboxyl ACP thioesterase AacuM then breaks the thioester bond and releases the atrochrysone carboxylic acid from AacuL. Atrochrysone carboxylic acid is decarboxylated by the decarboxylase AacuI, and oxidized by the anthrone oxygenase AacuG to yield emodin. Emodin is then reduced to emodin hydroquinone by a yet unidentified oxidoreductase. A-ring reduction by the short chain dehydrogenase AacuN, dehydration by the scytalone dehydratase-like protein AacuK and probable spontaneous re-oxidation, results in overall deoxygenation to chrysophanol. Baeyer-Villiger oxidation by the Baeyer-Villiger monooxygenase (BVMO) AacuH then yields monodictyphenone. Monodictyphenone is transformed into compounds with the tetrahydroxanthone skeleton via methylesterification by the methyltransferase AacuQ, followed by the action of the flavin-dependent monooxygenase AacuC, the isomerase AacuP, and the short chain dehydrogenase/reductase AacuF or AacuD. AacuF and AacuD should accept the same compound as a substrate but perform the ketoreduction with a different stereoselectivity, thus yielding blennolides B and A, respectively. In the final step of the biosynthesis, the cytochrome P450 monooxygenase AacuE accepts blennolide B and/or blennolide A to conduct the dimerization reaction to furnish the tetrahydroxanthone dimers, secalonic acids D, B, and F. The sequence is that of Cytochrome P450 monooxygenase AacuE from Aspergillus aculeatus (strain ATCC 16872 / CBS 172.66 / WB 5094).